A 342-amino-acid polypeptide reads, in one-letter code: Phosphate acyltransferase (342 aa).

Belongs to the PlsX family. Homodimer. Probably interacts with PlsY.

It localises to the cytoplasm. The enzyme catalyses a fatty acyl-[ACP] + phosphate = an acyl phosphate + holo-[ACP]. It functions in the pathway lipid metabolism; phospholipid metabolism. Its function is as follows. Catalyzes the reversible formation of acyl-phosphate (acyl-PO(4)) from acyl-[acyl-carrier-protein] (acyl-ACP). This enzyme utilizes acyl-ACP as fatty acyl donor, but not acyl-CoA. This Shewanella sp. (strain MR-4) protein is Phosphate acyltransferase.